Consider the following 124-residue polypeptide: Fluoride-specific ion channel FluC (124 aa).

Helical transmembrane passes span 4 to 24, 35 to 55, 62 to 82, and 102 to 122; these read LIFV…ISIF, FGTL…YALG, PEIK…FSTF, and IALN…LVFS. Na(+) contacts are provided by G74 and T77.

It belongs to the fluoride channel Fluc/FEX (TC 1.A.43) family.

It is found in the cell inner membrane. It catalyses the reaction fluoride(in) = fluoride(out). Its activity is regulated as follows. Na(+) is not transported, but it plays an essential structural role and its presence is essential for fluoride channel function. Fluoride-specific ion channel. Important for reducing fluoride concentration in the cell, thus reducing its toxicity. The sequence is that of Fluoride-specific ion channel FluC from Shewanella loihica (strain ATCC BAA-1088 / PV-4).